Here is a 179-residue protein sequence, read N- to C-terminus: Large ribosomal subunit protein uL5 (179 aa).

The protein belongs to the universal ribosomal protein uL5 family. As to quaternary structure, part of the 50S ribosomal subunit; part of the 5S rRNA/L5/L18/L25 subcomplex. Contacts the 5S rRNA and the P site tRNA. Forms a bridge to the 30S subunit in the 70S ribosome.

In terms of biological role, this is one of the proteins that bind and probably mediate the attachment of the 5S RNA into the large ribosomal subunit, where it forms part of the central protuberance. In the 70S ribosome it contacts protein S13 of the 30S subunit (bridge B1b), connecting the 2 subunits; this bridge is implicated in subunit movement. Contacts the P site tRNA; the 5S rRNA and some of its associated proteins might help stabilize positioning of ribosome-bound tRNAs. In Pseudomonas putida (strain W619), this protein is Large ribosomal subunit protein uL5.